The chain runs to 2506 residues: Zinc finger protein 462 (2506 aa).

3 consecutive C2H2-type zinc fingers follow at residues 4–27, 108–131, and 162–185; these read LQCD…QDVH, FQCK…RKVH, and FSCQ…KMYH. Lysine 20 participates in a covalent cross-link: Glycyl lysine isopeptide (Lys-Gly) (interchain with G-Cter in SUMO1); alternate. Lysine 20 participates in a covalent cross-link: Glycyl lysine isopeptide (Lys-Gly) (interchain with G-Cter in SUMO2); alternate. Residues 215 to 241 are interaction with PBX1; it reads PCKELPAEVVERSILESMVKPLTKSRG. Residues lysine 234 and lysine 271 each participate in a glycyl lysine isopeptide (Lys-Gly) (interchain with G-Cter in SUMO2) cross-link. The tract at residues 280–299 is disordered; sequence QEGTNLPDVPNKSAPSPTSN. 2 O-linked (GlcNAc6P) serine glycosylation sites follow: serine 292 and serine 309. Residues lysine 337, lysine 347, and lysine 349 each participate in a glycyl lysine isopeptide (Lys-Gly) (interchain with G-Cter in SUMO2) cross-link. Residues 337 to 356 form a disordered region; sequence KFSPMSYPQMKPKSPHNSGL. Phosphoserine is present on residues serine 350 and serine 354. Residue lysine 428 forms a Glycyl lysine isopeptide (Lys-Gly) (interchain with G-Cter in SUMO2) linkage. C2H2-type zinc fingers lie at residues 439–462 and 470–492; these read FQCP…ENIH and YKCD…KQCH. Residue lysine 484 forms a Glycyl lysine isopeptide (Lys-Gly) (interchain with G-Cter in SUMO2) linkage. Positions 535-596 are disordered; sequence DPLQQQQPPQ…QPQPPTQAAP (62 aa). Positions 542–593 are enriched in pro residues; that stretch reads PPQPPPPPPPPPPSQPQPLQQPQPPQLQPPHQVPPQPQTQPPPTQQPQPPTQ. The C2H2-type 6 zinc finger occupies 600 to 623; sequence YKCTMCNYSTTTLKGLRVHQQHKH. Residues lysine 631, lysine 657, and lysine 668 each participate in a glycyl lysine isopeptide (Lys-Gly) (interchain with G-Cter in SUMO2) cross-link. The tract at residues 636-661 is disordered; that stretch reads PSSLPLENETDSHPSSSNTVKKSQTS. Residues 648–661 show a composition bias toward polar residues; that stretch reads HPSSSNTVKKSQTS. Phosphoserine is present on serine 688. Residues lysine 706 and aspartate 849 each participate in a glycyl lysine isopeptide (Lys-Gly) (interchain with G-Cter in SUMO2) cross-link. 3 C2H2-type zinc fingers span residues 843-866, 886-908, and 925-948; these read YYCK…QRMH, YRCL…YGEH, and YRCR…QRMH. Lysine 986 participates in a covalent cross-link: Glycyl lysine isopeptide (Lys-Gly) (interchain with G-Cter in SUMO2). The C2H2-type 10 zinc finger occupies 1030–1053; the sequence is YDCDVCSFASPNMHSVLVHYQKKH. A Phosphoserine modification is found at serine 1090. A Glycyl lysine isopeptide (Lys-Gly) (interchain with G-Cter in SUMO2) cross-link involves residue lysine 1135. A disordered region spans residues 1157–1186; that stretch reads MRGVEGPQGSPRPPAPIQQLNRSSSERDGP. Serine 1166 is modified (phosphoserine). Glycyl lysine isopeptide (Lys-Gly) (interchain with G-Cter in SUMO2) cross-links involve residues lysine 1206, lysine 1214, lysine 1220, and lysine 1243. 2 C2H2-type zinc fingers span residues 1265–1288 and 1470–1493; these read LKCR…KKDH and YQCT…GKKH. Lysine 1499 participates in a covalent cross-link: Glycyl lysine isopeptide (Lys-Gly) (interchain with G-Cter in SUMO2). A C2H2-type 13 zinc finger spans residues 1515-1538; that stretch reads YKCRHCPYINTRIHGVLTHYQKRH. Glycyl lysine isopeptide (Lys-Gly) (interchain with G-Cter in SUMO2) cross-links involve residues lysine 1571 and lysine 1591. 3 C2H2-type zinc fingers span residues 1577 to 1600, 1660 to 1683, and 1697 to 1720; these read YRCK…EKYH, FRCQ…RIKH, and FKCA…QKRH. Residues lysine 1698 and lysine 1780 each participate in a glycyl lysine isopeptide (Lys-Gly) (interchain with G-Cter in SUMO2) cross-link. The C2H2-type 17 zinc finger occupies 1892 to 1914; sequence YQCKHCDSKLQSTAELTSHLNIH. A Glycyl lysine isopeptide (Lys-Gly) (interchain with G-Cter in SUMO2) cross-link involves residue lysine 1946. A C2H2-type 18; degenerate zinc finger spans residues 1968–1992; the sequence is YKCKFCVEVHPTLRAICNHLRKHVQ. Residue lysine 2004 is modified to N6-methyllysine. 3 consecutive C2H2-type zinc fingers follow at residues 2025–2048, 2054–2077, and 2083–2106; these read YSCQ…QTHH, FRCK…LKAH, and YKCS…LKVH. Residue lysine 2104 forms a Glycyl lysine isopeptide (Lys-Gly) (interchain with G-Cter in SUMO2) linkage. A disordered region spans residues 2122-2152; that stretch reads SSHSHHSSQKATPAEEVEDSNDSSYSEPPDV. Polar residues predominate over residues 2143–2152; sequence DSSYSEPPDV. A phosphoserine mark is found at serine 2172 and serine 2177. C2H2-type zinc fingers lie at residues 2191-2214, 2220-2243, and 2254-2276; these read LHCE…RDKH, FKCK…EAGH, and LRCP…IVLH. Lysine 2293 participates in a covalent cross-link: Glycyl lysine isopeptide (Lys-Gly) (interchain with G-Cter in SUMO2). C2H2-type zinc fingers lie at residues 2300–2322 and 2328–2351; these read FRCD…IEKH and YKCQ…RDEH. A disordered region spans residues 2371-2396; sequence MKEKMESSSSDDEDKEEEMNSKAEDR. The C2H2-type 27 zinc finger occupies 2414-2436; that stretch reads FPCEFCGRAFSQGSEWERHVLRH. Glycyl lysine isopeptide (Lys-Gly) (interchain with G-Cter in SUMO2) cross-links involve residues lysine 2444 and lysine 2504.

Interacts with PBX1; this interaction prevents PBX1-HOXA9 heterodimer from forming and binding to DNA. Post-translationally, O-GlcNAcylated with O-GlcNAc-6-phosphate.

It is found in the nucleus. Zinc finger nuclear factor involved in transcription by regulating chromatin structure and organization. Involved in the pluripotency and differentiation of embryonic stem cells by regulating SOX2, POU5F1/OCT4, and NANOG. By binding PBX1, prevents the heterodimerization of PBX1 and HOXA9 and their binding to DNA. Regulates neuronal development and neural cell differentiation. This Homo sapiens (Human) protein is Zinc finger protein 462.